The chain runs to 329 residues: Beta-1,3-galactosyltransferase 6 (329 aa).

Over 1 to 11 the chain is Cytoplasmic; the sequence is MKLLRRAWRRR. A helical; Signal-anchor for type II membrane protein membrane pass occupies residues 12 to 34; the sequence is AALGLGTLALCGAALLYLARCAA. At 35-329 the chain is on the lumenal side; it reads EPGDPRAMSG…QCCQRREGIP (295 aa). N-linked (GlcNAc...) asparagine glycosylation occurs at Asn-131.

It belongs to the glycosyltransferase 31 family. The cofactor is Mn(2+). Ubiquitous.

The protein resides in the golgi apparatus. Its subcellular location is the golgi stack membrane. The enzyme catalyses 3-O-(beta-D-galactosyl-(1-&gt;4)-beta-D-xylosyl)-L-seryl-[protein] + UDP-alpha-D-galactose = 3-O-(beta-D-galactosyl-(1-&gt;3)-beta-D-galactosyl-(1-&gt;4)-beta-D-xylosyl)-L-seryl-[protein] + UDP + H(+). It participates in glycan metabolism; chondroitin sulfate biosynthesis. It functions in the pathway glycan metabolism; heparan sulfate biosynthesis. Its function is as follows. Beta-1,3-galactosyltransferase that transfers galactose from UDP-galactose to substrates with a terminal beta-linked galactose residue. Has a preference for galactose-beta-1,4-xylose that is found in the linker region of glycosaminoglycans, such as heparan sulfate and chondroitin sulfate. Has no activity towards substrates with terminal glucosamine or galactosamine residues. This Homo sapiens (Human) protein is Beta-1,3-galactosyltransferase 6 (B3GALT6).